A 551-amino-acid chain; its full sequence is DNA double-strand break repair helicase HerA (551 aa).

ATP is bound by residues R152, 161-166 (GAGKSN), and 507-508 (RI).

This sequence belongs to the HerA family. In terms of assembly, homohexamer. Interacts with NurA.

The catalysed reaction is Couples ATP hydrolysis with the unwinding of duplex DNA at the replication fork by translocating in the 5'-3' direction. This creates two antiparallel DNA single strands (ssDNA). The leading ssDNA polymer is the template for DNA polymerase III holoenzyme which synthesizes a continuous strand.. It catalyses the reaction ATP + H2O = ADP + phosphate + H(+). It carries out the reaction Couples ATP hydrolysis with the unwinding of duplex DNA by translocating in the 3'-5' direction.. Helicase activity is stimulated in the presence of NurA. Functionally, involved in DNA double-strand break (DSB) repair. Probably acts with NurA to stimulate resection of the 5' strand and produce the long 3' single-strand that is required for RadA loading. Has DNA-dependent ATPase activity and DNA helicase activity. This Pyrococcus furiosus (strain ATCC 43587 / DSM 3638 / JCM 8422 / Vc1) protein is DNA double-strand break repair helicase HerA.